A 494-amino-acid chain; its full sequence is Glycerol kinase (494 aa).

Residue Thr-12 participates in ADP binding. Residues Thr-12, Thr-13, and Ser-14 each coordinate ATP. Thr-12 contacts sn-glycerol 3-phosphate. Arg-16 contacts ADP. Positions 82, 83, 134, and 241 each coordinate sn-glycerol 3-phosphate. The glycerol site is built by Arg-82, Glu-83, Tyr-134, Asp-241, and Gln-242. Residues Thr-263 and Gly-306 each coordinate ADP. Positions 263, 306, 310, and 407 each coordinate ATP. Residue Gly-407 participates in ADP binding.

The protein belongs to the FGGY kinase family.

The enzyme catalyses glycerol + ATP = sn-glycerol 3-phosphate + ADP + H(+). It functions in the pathway polyol metabolism; glycerol degradation via glycerol kinase pathway; sn-glycerol 3-phosphate from glycerol: step 1/1. Its activity is regulated as follows. Inhibited by fructose 1,6-bisphosphate (FBP). Functionally, key enzyme in the regulation of glycerol uptake and metabolism. Catalyzes the phosphorylation of glycerol to yield sn-glycerol 3-phosphate. This chain is Glycerol kinase, found in Brachyspira hyodysenteriae (strain ATCC 49526 / WA1).